We begin with the raw amino-acid sequence, 406 residues long: 4-hydroxy-3-methylbut-2-en-1-yl diphosphate synthase (flavodoxin) (406 aa).

[4Fe-4S] cluster contacts are provided by C297, C300, C343, and E350.

This sequence belongs to the IspG family. Homodimer. Requires [4Fe-4S] cluster as cofactor.

The enzyme catalyses (2E)-4-hydroxy-3-methylbut-2-enyl diphosphate + oxidized [flavodoxin] + H2O + 2 H(+) = 2-C-methyl-D-erythritol 2,4-cyclic diphosphate + reduced [flavodoxin]. It participates in isoprenoid biosynthesis; isopentenyl diphosphate biosynthesis via DXP pathway; isopentenyl diphosphate from 1-deoxy-D-xylulose 5-phosphate: step 5/6. Functionally, converts 2C-methyl-D-erythritol 2,4-cyclodiphosphate (ME-2,4cPP) into 1-hydroxy-2-methyl-2-(E)-butenyl 4-diphosphate. This is 4-hydroxy-3-methylbut-2-en-1-yl diphosphate synthase (flavodoxin) from Thermus thermophilus (strain ATCC BAA-163 / DSM 7039 / HB27).